A 428-amino-acid chain; its full sequence is Aspartate--tRNA(Asp) ligase (428 aa).

Residue Glu170 participates in L-aspartate binding. Positions 192–195 (QLYK) are aspartate. Arg213 provides a ligand contact to L-aspartate. ATP is bound by residues 213–215 (RAE) and Glu351. Mg(2+) contacts are provided by Glu351 and Ser354. Residues Ser354 and Arg358 each coordinate L-aspartate. An ATP-binding site is contributed by 399–402 (GFNR).

It belongs to the class-II aminoacyl-tRNA synthetase family. Type 2 subfamily. Homodimer. Requires Mg(2+) as cofactor.

It localises to the cytoplasm. It catalyses the reaction tRNA(Asp) + L-aspartate + ATP = L-aspartyl-tRNA(Asp) + AMP + diphosphate. Its function is as follows. Catalyzes the attachment of L-aspartate to tRNA(Asp) in a two-step reaction: L-aspartate is first activated by ATP to form Asp-AMP and then transferred to the acceptor end of tRNA(Asp). The protein is Aspartate--tRNA(Asp) ligase of Pyrobaculum aerophilum (strain ATCC 51768 / DSM 7523 / JCM 9630 / CIP 104966 / NBRC 100827 / IM2).